A 234-amino-acid chain; its full sequence is Biosynthetic peptidoglycan transglycosylase (234 aa).

Residues 11–31 (RFLLFAMLGFVGLSVLLVLVF) traverse the membrane as a helical segment.

It belongs to the glycosyltransferase 51 family.

It is found in the cell inner membrane. The enzyme catalyses [GlcNAc-(1-&gt;4)-Mur2Ac(oyl-L-Ala-gamma-D-Glu-L-Lys-D-Ala-D-Ala)](n)-di-trans,octa-cis-undecaprenyl diphosphate + beta-D-GlcNAc-(1-&gt;4)-Mur2Ac(oyl-L-Ala-gamma-D-Glu-L-Lys-D-Ala-D-Ala)-di-trans,octa-cis-undecaprenyl diphosphate = [GlcNAc-(1-&gt;4)-Mur2Ac(oyl-L-Ala-gamma-D-Glu-L-Lys-D-Ala-D-Ala)](n+1)-di-trans,octa-cis-undecaprenyl diphosphate + di-trans,octa-cis-undecaprenyl diphosphate + H(+). The protein operates within cell wall biogenesis; peptidoglycan biosynthesis. Its function is as follows. Peptidoglycan polymerase that catalyzes glycan chain elongation from lipid-linked precursors. The polypeptide is Biosynthetic peptidoglycan transglycosylase (Chromohalobacter salexigens (strain ATCC BAA-138 / DSM 3043 / CIP 106854 / NCIMB 13768 / 1H11)).